Here is a 411-residue protein sequence, read N- to C-terminus: POU domain, class 4, transcription factor 2 (411 aa).

The segment at Leu29–Pro95 is disordered. Residues Ser31–Asn52 are compositionally biased toward low complexity. Gly residues-rich tracts occupy residues Ala53–Arg68 and Gly76–Ser86. Residues Cys93 to His239 are required for transcriptional activation. The POU-IV box signature appears at Arg112–Ile121. Over residues Ser154–Ala168 the composition is skewed to low complexity. Positions Ser154 to Leu190 are disordered. The span at Thr172–Pro186 shows a compositional bias: basic residues. The short motif at His173–His187 is the Nuclear speckle targeting signal element. The segment at Ala240–Ile411 is required for DNA-binding and transcriptional repression. Residues Asp252–Glu329 form the POU-specific domain. Positions Lys347 to Lys406 form a DNA-binding region, homeobox.

Belongs to the POU transcription factor family. Class-4 subfamily. As to quaternary structure, isoform 2: Interacts with POU4F1 isoform 1; this interaction inhibits both POU4F1 DNA-binding and transcriptional activities. Isoform 2: Interacts (C-terminus) with ESR1 (via DNA-binding domain); this interaction increases the estrogen receptor ESR1 transcriptional activity in a DNA- and ligand 17-beta-estradiol-independent manner. Isoform 2: Interacts (via C-terminus) with TP53 (via N-terminus). Interacts with DLX1 (via homeobox DNA-binding domain); this interaction suppresses DLX1-mediated transcriptional activity in postnatal retina enhancing retinal ganglion cell (RGC) differentiation. Interacts with DLX2 (via homeobox DNA-binding domain); this interaction enhances RGC differentiation. Isoform 1: Interacts (via C-terminus) with ISL1 (via C-terminus). Isoform 1: Interacts with ISL2. Isoform 1: Interacts with LHX2. Expressed in retinal ganglion cells (RGCs). Expressed in mature osteoclasts. Expressed in cells of layers of the superior colliculus and the adjacent periaqueductal gray (at protein level). Expressed in the brain, peripheral sensory nervous system and retina. Expressed in the optical, intermediate, and deep gray areas of the superior colliculus, the dorsal column of the mesencephalic and pontine central gray, and the lateral interpeduncular nucleus of the brain. Expressed predominantly in postmitotic, terminally differentiated neurons. Expressed in ganglion cell layer (GCL) of the retina.

It localises to the nucleus. It is found in the nucleus speckle. The protein localises to the cytoplasm. In terms of biological role, tissue-specific DNA-binding transcription factor involved in the development and differentiation of target cells. Functions either as activator or repressor by modulating the rate of target gene transcription through RNA polymerase II enzyme in a promoter-dependent manner. Binds to the consensus octamer motif 5'-AT[A/T]A[T/A]T[A/T]A-3' of promoter of target genes. Plays a fundamental role in the gene regulatory network essential for retinal ganglion cell (RGC) differentiation. Binds to an octamer site to form a ternary complex with ISL1; cooperates positively with ISL1 and ISL2 to potentiate transcriptional activation of RGC target genes being involved in RGC fate commitment in the developing retina and RGC axon formation and pathfinding. Inhibits DLX1 and DLX2 transcriptional activities preventing DLX1- and DLX2-mediated ability to promote amacrine cell fate specification. In cooperation with TP53 potentiates transcriptional activation of BAX promoter activity increasing neuronal cell apoptosis. Negatively regulates BAX promoter activity in the absence of TP53. Acts as a transcriptional coactivator via its interaction with the transcription factor ESR1 by enhancing its effect on estrogen response element (ERE)-containing promoter. Antagonizes the transcriptional stimulatory activity of POU4F1 by preventing its binding to an octamer motif. Involved in TNFSF11-mediated terminal osteoclast differentiation. The polypeptide is POU domain, class 4, transcription factor 2 (Mus musculus (Mouse)).